We begin with the raw amino-acid sequence, 525 residues long: Sensory neuron membrane protein 1 (525 aa).

The Cytoplasmic portion of the chain corresponds to 1–11 (MLLPKELKYAA). A helical membrane pass occupies residues 12–32 (IAGGVAVFGLIFGWVLFPVIL). The Extracellular segment spans residues 33–456 (KGQLKKEMAL…LKHQLFIPKR (424 aa)). Residues asparagine 67, asparagine 229, and asparagine 324 are each glycosylated (N-linked (GlcNAc...) asparagine). Cystine bridges form between cysteine 268/cysteine 333, cysteine 297/cysteine 352, and cysteine 335/cysteine 341. A glycan (N-linked (GlcNAc...) asparagine) is linked at asparagine 440. The helical transmembrane segment at 457 to 477 (VVGVLRWWMVSFGSLGADIGI) threads the bilayer. At 478–525 (VYHFRDHIMRLAVSGDTKVSKVTPEEDPEQKDISVIGPPAQEPAKINI) the chain is on the cytoplasmic side. Residues 497 to 525 (SKVTPEEDPEQKDISVIGPPAQEPAKINI) are disordered.

This sequence belongs to the CD36 family.

The protein resides in the cell membrane. Functionally, plays an olfactory role that is not restricted to pheromone sensitivity. This Mamestra brassicae (Cabbage moth) protein is Sensory neuron membrane protein 1.